The primary structure comprises 196 residues: MSEKATEIANLLSPTVESLGLELLGVEYLPAPGGATLRLYIDVPLAEQPERVINVDDCERVSREVSAQLDVEDPISGNYTLEVSSPGVDRPLFTLEQFARHTGESAKIVLKLAQDGRRRFQGQILRIDAEAAAVVFAVDGKDVQIGYDNIDKARIVPDWVALGLAPQKPNKPGPKKPGHEKKKPSNESAAGKPRAE.

The segment at 164–196 (LAPQKPNKPGPKKPGHEKKKPSNESAAGKPRAE) is disordered. Over residues 173 to 182 (GPKKPGHEKK) the composition is skewed to basic residues.

Belongs to the RimP family.

It localises to the cytoplasm. In terms of biological role, required for maturation of 30S ribosomal subunits. The sequence is that of Ribosome maturation factor RimP from Xanthomonas axonopodis pv. citri (strain 306).